The following is a 524-amino-acid chain: Bifunctional purine biosynthesis protein PurH (524 aa).

The region spanning 1 to 144 (MTRRALVSVS…KNSAHVGVVV (144 aa)) is the MGS-like domain.

Belongs to the PurH family.

The enzyme catalyses (6R)-10-formyltetrahydrofolate + 5-amino-1-(5-phospho-beta-D-ribosyl)imidazole-4-carboxamide = 5-formamido-1-(5-phospho-D-ribosyl)imidazole-4-carboxamide + (6S)-5,6,7,8-tetrahydrofolate. The catalysed reaction is IMP + H2O = 5-formamido-1-(5-phospho-D-ribosyl)imidazole-4-carboxamide. The protein operates within purine metabolism; IMP biosynthesis via de novo pathway; 5-formamido-1-(5-phospho-D-ribosyl)imidazole-4-carboxamide from 5-amino-1-(5-phospho-D-ribosyl)imidazole-4-carboxamide (10-formyl THF route): step 1/1. Its pathway is purine metabolism; IMP biosynthesis via de novo pathway; IMP from 5-formamido-1-(5-phospho-D-ribosyl)imidazole-4-carboxamide: step 1/1. The protein is Bifunctional purine biosynthesis protein PurH of Anaeromyxobacter sp. (strain K).